Here is an 82-residue protein sequence, read N- to C-terminus: Consomatin Ar1 (82 aa).

Residues 1–22 form the signal peptide; sequence MQTAYWVVVMMMMVWVTAPVSE. Positions 23-60 are excised as a propeptide; the sequence is GGKLSDVIWGLVPDDLTPQIILQILNASRHAYRRVRPR. A disulfide bridge connects residues cysteine 64 and cysteine 69. At tryptophan 66 the chain carries D-tryptophan. 4-hydroxyproline occurs at positions 70, 71, and 73. Residues 74–82 constitute a propeptide that is removed on maturation; it reads QWIHPLVKR.

This sequence belongs to the conotoxin C superfamily. Consomatin family. In terms of tissue distribution, expressed by the venom duct.

It is found in the secreted. Functionally, moderately activates human somatostatin receptors (SSTR) with a preferential activation of SSTR1 and SSTR4. In vivo, does not cause behavioral changes in mice within a few minutes of intracranial injection, but causes a progressive loss of movement thereafter. Four to five hours after injection, mice recover, even with the highest dose tested. Shows antinociception and antihyperalgesia activities in two mouse models of acute pain, most probably by acting outside the central nervous system. This is Consomatin Ar1 from Conus arenatus (Sand-dusted cone).